A 272-amino-acid polypeptide reads, in one-letter code: Shikimate dehydrogenase (NADP(+)) (272 aa).

Residues 14 to 16 (SKS) and T61 contribute to the shikimate site. K65 acts as the Proton acceptor in catalysis. E77 is a binding site for NADP(+). Shikimate contacts are provided by N86 and D102. NADP(+) contacts are provided by residues 126 to 130 (GAGGA), 149 to 154 (NRTFSR), and M213. Position 215 (Y215) interacts with shikimate. G237 is a binding site for NADP(+).

It belongs to the shikimate dehydrogenase family. As to quaternary structure, homodimer.

It carries out the reaction shikimate + NADP(+) = 3-dehydroshikimate + NADPH + H(+). The protein operates within metabolic intermediate biosynthesis; chorismate biosynthesis; chorismate from D-erythrose 4-phosphate and phosphoenolpyruvate: step 4/7. Involved in the biosynthesis of the chorismate, which leads to the biosynthesis of aromatic amino acids. Catalyzes the reversible NADPH linked reduction of 3-dehydroshikimate (DHSA) to yield shikimate (SA). This chain is Shikimate dehydrogenase (NADP(+)), found in Photorhabdus laumondii subsp. laumondii (strain DSM 15139 / CIP 105565 / TT01) (Photorhabdus luminescens subsp. laumondii).